The sequence spans 198 residues: FMN-dependent NADH:quinone oxidoreductase (198 aa).

Ser10 lines the FMN pocket.

The protein belongs to the azoreductase type 1 family. As to quaternary structure, homodimer. FMN is required as a cofactor.

The catalysed reaction is 2 a quinone + NADH + H(+) = 2 a 1,4-benzosemiquinone + NAD(+). It carries out the reaction N,N-dimethyl-1,4-phenylenediamine + anthranilate + 2 NAD(+) = 2-(4-dimethylaminophenyl)diazenylbenzoate + 2 NADH + 2 H(+). Its function is as follows. Quinone reductase that provides resistance to thiol-specific stress caused by electrophilic quinones. Functionally, also exhibits azoreductase activity. Catalyzes the reductive cleavage of the azo bond in aromatic azo compounds to the corresponding amines. In Paraburkholderia phymatum (strain DSM 17167 / CIP 108236 / LMG 21445 / STM815) (Burkholderia phymatum), this protein is FMN-dependent NADH:quinone oxidoreductase.